The chain runs to 428 residues: Glutamate-1-semialdehyde 2,1-aminomutase (428 aa).

N6-(pyridoxal phosphate)lysine is present on K265.

This sequence belongs to the class-III pyridoxal-phosphate-dependent aminotransferase family. HemL subfamily. Homodimer. Requires pyridoxal 5'-phosphate as cofactor.

Its subcellular location is the cytoplasm. It carries out the reaction (S)-4-amino-5-oxopentanoate = 5-aminolevulinate. The protein operates within porphyrin-containing compound metabolism; protoporphyrin-IX biosynthesis; 5-aminolevulinate from L-glutamyl-tRNA(Glu): step 2/2. This chain is Glutamate-1-semialdehyde 2,1-aminomutase, found in Shewanella sediminis (strain HAW-EB3).